A 149-amino-acid polypeptide reads, in one-letter code: D-aminoacyl-tRNA deacylase (149 aa).

The short motif at 137–138 (GP) is the Gly-cisPro motif, important for rejection of L-amino acids element.

Belongs to the DTD family. In terms of assembly, homodimer.

The protein resides in the cytoplasm. It carries out the reaction glycyl-tRNA(Ala) + H2O = tRNA(Ala) + glycine + H(+). The catalysed reaction is a D-aminoacyl-tRNA + H2O = a tRNA + a D-alpha-amino acid + H(+). In terms of biological role, an aminoacyl-tRNA editing enzyme that deacylates mischarged D-aminoacyl-tRNAs. Also deacylates mischarged glycyl-tRNA(Ala), protecting cells against glycine mischarging by AlaRS. Acts via tRNA-based rather than protein-based catalysis; rejects L-amino acids rather than detecting D-amino acids in the active site. By recycling D-aminoacyl-tRNA to D-amino acids and free tRNA molecules, this enzyme counteracts the toxicity associated with the formation of D-aminoacyl-tRNA entities in vivo and helps enforce protein L-homochirality. The chain is D-aminoacyl-tRNA deacylase from Clostridium acetobutylicum (strain ATCC 824 / DSM 792 / JCM 1419 / IAM 19013 / LMG 5710 / NBRC 13948 / NRRL B-527 / VKM B-1787 / 2291 / W).